The chain runs to 349 residues: Aspartate carbamoyltransferase catalytic subunit (349 aa).

2 residues coordinate carbamoyl phosphate: R59 and T60. An L-aspartate-binding site is contributed by K87. Carbamoyl phosphate-binding residues include R109, H142, and Q145. 2 residues coordinate L-aspartate: R182 and R253. Residues G294 and P295 each coordinate carbamoyl phosphate.

Belongs to the aspartate/ornithine carbamoyltransferase superfamily. ATCase family. As to quaternary structure, heterododecamer (2C3:3R2) of six catalytic PyrB chains organized as two trimers (C3), and six regulatory PyrI chains organized as three dimers (R2).

The enzyme catalyses carbamoyl phosphate + L-aspartate = N-carbamoyl-L-aspartate + phosphate + H(+). It functions in the pathway pyrimidine metabolism; UMP biosynthesis via de novo pathway; (S)-dihydroorotate from bicarbonate: step 2/3. Its function is as follows. Catalyzes the condensation of carbamoyl phosphate and aspartate to form carbamoyl aspartate and inorganic phosphate, the committed step in the de novo pyrimidine nucleotide biosynthesis pathway. The chain is Aspartate carbamoyltransferase catalytic subunit from Synechococcus sp. (strain CC9605).